A 737-amino-acid chain; its full sequence is ARMADILLO BTB ARABIDOPSIS PROTEIN 1 (737 aa).

ARM repeat units lie at residues 112–154 (DENV…KDCA), 165–212 (PGYQ…NIAH), 215–254 (PRIK…TVSF), 257–296 (DENK…NLVH), 299–338 (PDIK…QFAA), 341–380 (SDCK…RLAQ), 382–421 (AHNQ…GLAD), 456–495 (LKRL…HLCD), and 497–536 (KDGK…ELAK). One can recognise a BTB domain in the interval 568 to 635 (SDVTFLIDGK…IYSGRINIAK (68 aa)).

As to quaternary structure, forms a heterodimeric complex with TCP24. Interacts with the origin recognition complex (preRC) components ORC1A, ORC1B, CDT1A and CDT1B. Interacts with DUF7/AIP1. As to expression, weakly expressed in the emerging lateral roots and mainly expressed in the shoot apex, young leaves and flower buds.

Its subcellular location is the nucleus. It functions in the pathway protein modification; protein ubiquitination. May act as a substrate-specific adapter of an E3 ubiquitin-protein ligase complex (CUL3-RBX1-BTB) which mediates the ubiquitination and subsequent proteasomal degradation of target proteins. In association with TCP24, exerts a negative role in cell proliferation in leaves, possibly by inhibiting mitotic DNA replication. This Arabidopsis thaliana (Mouse-ear cress) protein is ARMADILLO BTB ARABIDOPSIS PROTEIN 1 (ABAP1).